A 130-amino-acid polypeptide reads, in one-letter code: Histone H2A type 1 (130 aa).

The tract at residues 1–22 (MSGRGKQGGKTRAKAKTRSSRA) is disordered. The residue at position 2 (S2) is an N-acetylserine. At S2 the chain carries Phosphoserine. The residue at position 6 (K6) is an N6-(2-hydroxyisobutyryl)lysine. Residue K6 is modified to N6-acetyllysine. A compositionally biased stretch (basic residues) spans 7–19 (QGGKTRAKAKTRS). K10 is modified (N6-(2-hydroxyisobutyryl)lysine; alternate). Position 10 is an N6-lactoyllysine; alternate (K10). Residue K10 is modified to N6-succinyllysine. Residues K14 and K16 each participate in a glycyl lysine isopeptide (Lys-Gly) (interchain with G-Cter in ubiquitin) cross-link. Residue K37 is modified to N6-(2-hydroxyisobutyryl)lysine; alternate. 2 positions are modified to N6-(2-hydroxyisobutyryl)lysine: K75 and K76. At K96 the chain carries N6-(2-hydroxyisobutyryl)lysine; alternate. N6-succinyllysine is present on K96. Residue K96 is modified to N6-glutaryllysine; alternate. Position 105 is an N5-methylglutamine (Q105). Residue K119 is modified to N6-(2-hydroxyisobutyryl)lysine; alternate. N6-glutaryllysine; alternate is present on K119. K120 is covalently cross-linked (Glycyl lysine isopeptide (Lys-Gly) (interchain with G-Cter in ubiquitin)).

It belongs to the histone H2A family. In terms of assembly, the nucleosome is a histone octamer containing two molecules each of H2A, H2B, H3 and H4 assembled in one H3-H4 heterotetramer and two H2A-H2B heterodimers. The octamer wraps approximately 147 bp of DNA. Post-translationally, monoubiquitination of Lys-120 (H2AK119Ub) gives a specific tag for epigenetic transcriptional repression. Following DNA double-strand breaks (DSBs), it is ubiquitinated through 'Lys-63' linkage of ubiquitin moieties, leading to the recruitment of repair proteins to sites of DNA damage. H2AK119Ub and ionizing radiation-induced 'Lys-63'-linked ubiquitination are distinct events. Phosphorylation on Ser-2 is enhanced during mitosis. Phosphorylation on Ser-2 directly represses transcription. In terms of processing, glutamine methylation at Gln-105 (H2AQ104me) by FBL is specifically dedicated to polymerase I. It is present at 35S ribosomal DNA locus and impairs binding of the FACT complex.

It localises to the nucleus. The protein localises to the chromosome. In terms of biological role, core component of nucleosome. Nucleosomes wrap and compact DNA into chromatin, limiting DNA accessibility to the cellular machineries which require DNA as a template. Histones thereby play a central role in transcription regulation, DNA repair, DNA replication and chromosomal stability. DNA accessibility is regulated via a complex set of post-translational modifications of histones, also called histone code, and nucleosome remodeling. This is Histone H2A type 1 from Xenopus laevis (African clawed frog).